The following is a 161-amino-acid chain: uncharacterized protein (161 aa).

The first 27 residues, 1–27, serve as a signal peptide directing secretion; sequence MKKIGLLFMLCLAALFTIGFPAQQADA.

It is found in the secreted. This is an uncharacterized protein from Bacillus subtilis (strain 168).